The following is a 447-amino-acid chain: Beclin-1 (447 aa).

Residues 44 to 53 (PPLTAAPARP) show a composition bias toward low complexity. The disordered stretch occupies residues 44–71 (PPLTAAPARPGDAQEESALSEEAFTEGR). The BH3 signature appears at 105–124 (TMENLSRRLKVTGDLFDIMS). The stretch at 139–266 (DTLLDQLDTQ…QLDKLKKTNV (128 aa)) forms a coiled coil. The segment at 242 to 447 (DELKSVENQM…AWVSSQFYNK (206 aa)) is evolutionary conserved domain (ECD). Residues 422–447 (WTKALKFMLTNLKWGLAWVSSQFYNK) form a required for membrane-association region.

This sequence belongs to the beclin family. Component of the PI3K (PI3KC3/PI3K-III/class III phosphatidylinositol 3-kinase) complex. In terms of processing, may be proteolytically processed by caspases; the C-terminal fragment(s) may induce apoptosis.

The protein resides in the cytoplasm. It localises to the golgi apparatus. Its subcellular location is the trans-Golgi network membrane. It is found in the endosome membrane. The protein localises to the endoplasmic reticulum membrane. The protein resides in the mitochondrion membrane. It localises to the cytoplasmic vesicle. Its subcellular location is the autophagosome. Functionally, plays a central role in autophagy. Acts as core subunit of different PI3K complex forms that mediate formation of phosphatidylinositol 3-phosphate and are believed to play a role in multiple membrane trafficking pathways such as initiation of autophagosomes, maturation of autophagosomes and endocytosis. Involved in regulation of degradative endocytic trafficking and required for the abscission step in cytokinesis, probably in the context of PI3KC3-C2. This chain is Beclin-1 (BECN1), found in Gallus gallus (Chicken).